The following is a 107-amino-acid chain: Nucleoid-associated protein BLi00029/BL02358 (107 aa).

Residues 1–27 (MRGGMGNMQKMMKQMQKMQKDMQKAQE) form a disordered region. Positions 8–17 (MQKMMKQMQK) are enriched in low complexity. The segment covering 18–27 (MQKDMQKAQE) has biased composition (basic and acidic residues).

The protein belongs to the YbaB/EbfC family. As to quaternary structure, homodimer.

It localises to the cytoplasm. It is found in the nucleoid. Binds to DNA and alters its conformation. May be involved in regulation of gene expression, nucleoid organization and DNA protection. The polypeptide is Nucleoid-associated protein BLi00029/BL02358 (Bacillus licheniformis (strain ATCC 14580 / DSM 13 / JCM 2505 / CCUG 7422 / NBRC 12200 / NCIMB 9375 / NCTC 10341 / NRRL NRS-1264 / Gibson 46)).